Reading from the N-terminus, the 299-residue chain is uncharacterized protein (299 aa).

The helical transmembrane segment at 25–45 threads the bilayer; that stretch reads LLYFFKSLAMILFFIFFSLTS.

The protein localises to the membrane. This is an uncharacterized protein from Rickettsia prowazekii (strain Madrid E).